Reading from the N-terminus, the 495-residue chain is Germacrene A acid 8-beta-hydroxylase (495 aa).

A helical; Signal-anchor for type II membrane protein membrane pass occupies residues 3 to 23 (PFTTFSLVASSLILLICWALV). Asn-103 carries N-linked (GlcNAc...) asparagine glycosylation. Cys-433 is a binding site for heme.

It belongs to the cytochrome P450 family. It depends on heme as a cofactor. As to expression, mostly expressed in leaves and flowers, and, to a lower extent, in roots and stems.

It is found in the membrane. The catalysed reaction is germacra-1(10),4,11(13)-trien-12-oate + reduced [NADPH--hemoprotein reductase] + O2 = 8beta-hydroxygermacra-1(10),4,11(13)-trien-12-oate + oxidized [NADPH--hemoprotein reductase] + H2O + H(+). It catalyses the reaction germacra-1(10),4,11(13)-trien-12-oate + reduced [NADPH--hemoprotein reductase] + O2 = 8-epi-inunolide + oxidized [NADPH--hemoprotein reductase] + 2 H2O. It carries out the reaction germacra-1(10),4,11(13)-trien-12-oate + reduced [NADPH--hemoprotein reductase] + O2 = 8alpha-hydroxygermacra-1(10),4,11(13)-trien-12-oate + oxidized [NADPH--hemoprotein reductase] + H2O + H(+). The protein operates within secondary metabolite biosynthesis; terpenoid biosynthesis. Involved in the biosynthesis of germacrene-derived sesquiterpene lactones. Hydroxylates germacrene A acid to 8-beta-hydroxy-germacrene A and 8-alpha-hydroxy-germacrene A acids. Unlike 8-alpha-hydroxy-germacrene A acid with is spontaneously converted into inunolide (12, 8-alpha), 8-beta-hydroxy-germacrene A cannot undergo spontaneous lactonization. In Inula hupehensis (Inula helianthus-aquatilis subsp. hupehensis), this protein is Germacrene A acid 8-beta-hydroxylase.